We begin with the raw amino-acid sequence, 159 residues long: Eukaryotic translation initiation factor 5A-1 (159 aa).

Over residues 1 to 12 the composition is skewed to basic and acidic residues; it reads MSDEEHHFESKA. A disordered region spans residues 1 to 23; sequence MSDEEHHFESKADAGASKTYPQQ. At Lys-52 the chain carries Hypusine.

Belongs to the eIF-5A family. Lys-52 undergoes hypusination, a unique post-translational modification that consists in the addition of a butylamino group from spermidine to lysine side chain, leading to the formation of the unusual amino acid hypusine. eIF-5As are the only known proteins to undergo this modification, which is essential for their function.

Functionally, translation factor that promotes translation elongation and termination, particularly upon ribosome stalling at specific amino acid sequence contexts. Binds between the exit (E) and peptidyl (P) site of the ribosome and promotes rescue of stalled ribosome: specifically required for efficient translation of polyproline-containing peptides as well as other motifs that stall the ribosome. Acts as a ribosome quality control (RQC) cofactor by joining the RQC complex to facilitate peptidyl transfer during CAT tailing step. The polypeptide is Eukaryotic translation initiation factor 5A-1 (Solanum lycopersicum (Tomato)).